Here is a 131-residue protein sequence, read N- to C-terminus: D-ribose pyranase (131 aa).

H20 functions as the Proton donor in the catalytic mechanism. Residues D28, H98, and 120–122 each bind substrate; that span reads YAN.

The protein belongs to the RbsD / FucU family. RbsD subfamily. As to quaternary structure, homodecamer.

The protein resides in the cytoplasm. The enzyme catalyses beta-D-ribopyranose = beta-D-ribofuranose. Its pathway is carbohydrate metabolism; D-ribose degradation; D-ribose 5-phosphate from beta-D-ribopyranose: step 1/2. Functionally, catalyzes the interconversion of beta-pyran and beta-furan forms of D-ribose. This is D-ribose pyranase from Bacillus cereus (strain 03BB102).